A 206-amino-acid chain; its full sequence is Imidazoleglycerol-phosphate dehydratase (206 aa).

Residues 1-24 (MDPTASGRQAPRNPRQATVQRETK) form a disordered region.

Belongs to the imidazoleglycerol-phosphate dehydratase family.

Its subcellular location is the cytoplasm. It carries out the reaction D-erythro-1-(imidazol-4-yl)glycerol 3-phosphate = 3-(imidazol-4-yl)-2-oxopropyl phosphate + H2O. The protein operates within amino-acid biosynthesis; L-histidine biosynthesis; L-histidine from 5-phospho-alpha-D-ribose 1-diphosphate: step 6/9. The chain is Imidazoleglycerol-phosphate dehydratase from Acidothermus cellulolyticus (strain ATCC 43068 / DSM 8971 / 11B).